Consider the following 338-residue polypeptide: GTP 3',8-cyclase (338 aa).

One can recognise a Radical SAM core domain in the interval 8 to 227; that stretch reads KLQRPLKDLR…DMIHQVMPLE (220 aa). Residue R17 participates in GTP binding. Residues C24 and C28 each coordinate [4Fe-4S] cluster. Y30 is an S-adenosyl-L-methionine binding site. Residue C31 participates in [4Fe-4S] cluster binding. R71 serves as a coordination point for GTP. An S-adenosyl-L-methionine-binding site is contributed by G75. T102 is a GTP binding site. S126 lines the S-adenosyl-L-methionine pocket. K163 is a GTP binding site. M197 contributes to the S-adenosyl-L-methionine binding site. [4Fe-4S] cluster contacts are provided by C261 and C264. 266–268 serves as a coordination point for GTP; the sequence is RAR. C278 serves as a coordination point for [4Fe-4S] cluster.

This sequence belongs to the radical SAM superfamily. MoaA family. Monomer and homodimer. [4Fe-4S] cluster serves as cofactor.

It catalyses the reaction GTP + AH2 + S-adenosyl-L-methionine = (8S)-3',8-cyclo-7,8-dihydroguanosine 5'-triphosphate + 5'-deoxyadenosine + L-methionine + A + H(+). Its pathway is cofactor biosynthesis; molybdopterin biosynthesis. Its function is as follows. Catalyzes the cyclization of GTP to (8S)-3',8-cyclo-7,8-dihydroguanosine 5'-triphosphate. This Bacillus anthracis (strain CDC 684 / NRRL 3495) protein is GTP 3',8-cyclase.